Reading from the N-terminus, the 342-residue chain is tRNA N6-adenosine threonylcarbamoyltransferase (342 aa).

Fe cation-binding residues include His111 and His115. Residues 134–138 (LVSGG), Asp167, Gly180, and Asn277 each bind substrate. Asp305 contacts Fe cation.

This sequence belongs to the KAE1 / TsaD family. The cofactor is Fe(2+).

The protein localises to the cytoplasm. It catalyses the reaction L-threonylcarbamoyladenylate + adenosine(37) in tRNA = N(6)-L-threonylcarbamoyladenosine(37) in tRNA + AMP + H(+). Functionally, required for the formation of a threonylcarbamoyl group on adenosine at position 37 (t(6)A37) in tRNAs that read codons beginning with adenine. Is involved in the transfer of the threonylcarbamoyl moiety of threonylcarbamoyl-AMP (TC-AMP) to the N6 group of A37, together with TsaE and TsaB. TsaD likely plays a direct catalytic role in this reaction. The polypeptide is tRNA N6-adenosine threonylcarbamoyltransferase (Cellvibrio japonicus (strain Ueda107) (Pseudomonas fluorescens subsp. cellulosa)).